A 558-amino-acid chain; its full sequence is Proline--tRNA ligase (558 aa).

It belongs to the class-II aminoacyl-tRNA synthetase family. ProS type 1 subfamily. As to quaternary structure, homodimer.

The protein resides in the cytoplasm. The catalysed reaction is tRNA(Pro) + L-proline + ATP = L-prolyl-tRNA(Pro) + AMP + diphosphate. Its function is as follows. Catalyzes the attachment of proline to tRNA(Pro) in a two-step reaction: proline is first activated by ATP to form Pro-AMP and then transferred to the acceptor end of tRNA(Pro). As ProRS can inadvertently accommodate and process non-cognate amino acids such as alanine and cysteine, to avoid such errors it has two additional distinct editing activities against alanine. One activity is designated as 'pretransfer' editing and involves the tRNA(Pro)-independent hydrolysis of activated Ala-AMP. The other activity is designated 'posttransfer' editing and involves deacylation of mischarged Ala-tRNA(Pro). The misacylated Cys-tRNA(Pro) is not edited by ProRS. This chain is Proline--tRNA ligase, found in Coprothermobacter proteolyticus (strain ATCC 35245 / DSM 5265 / OCM 4 / BT).